We begin with the raw amino-acid sequence, 103 residues long: Large ribosomal subunit protein bL21 (103 aa).

The protein belongs to the bacterial ribosomal protein bL21 family. In terms of assembly, part of the 50S ribosomal subunit. Contacts protein L20.

In terms of biological role, this protein binds to 23S rRNA in the presence of protein L20. In Psychrobacter arcticus (strain DSM 17307 / VKM B-2377 / 273-4), this protein is Large ribosomal subunit protein bL21.